The primary structure comprises 470 residues: Cyclic AMP receptor-like protein D (470 aa).

At 1–16 (MSSCSSLSMDDRVKIG) the chain is on the extracellular side. The chain crosses the membrane as a helical span at residues 17-37 (YGSIAGASLSIIGSIGTIILI). The Cytoplasmic segment spans residues 38–123 (KIRNKKQEKK…NNNQKTKVSH (86 aa)). Residues 124-144 (FIINLSIANLLASIFMITIKL) form a helical membrane-spanning segment. The Extracellular segment spans residues 145–176 (MMIHFNDKFIKVLPSTANHSFNALISVCTIGN). A glycan (N-linked (GlcNAc...) asparagine) is linked at N162. C172 and C287 form a disulfide bridge. Residues 177–197 (GVIGFSFISTFFWTLAISMYI) form a helical membrane-spanning segment. Topologically, residues 198–253 (YQQFLSSSTINSNNNNNNINNINNNNNNNINNINNSKNNNSINNFNNSNKSNKIIK) are cytoplasmic. Residues 254–274 (MLFYFVCWVIPFVLGSILVSG) form a helical membrane-spanning segment. The Extracellular portion of the chain corresponds to 275 to 295 (SRLIELNSDLPWCSIDSNIQL). A helical transmembrane segment spans residues 296-316 (ISFYFPLIICLLATTFFTILI). The Cytoplasmic portion of the chain corresponds to 317–342 (KYKFSNDKLACSSSSLINLQSKIIQR). A helical membrane pass occupies residues 343-363 (LILFLIVILVCWVPSLISFFI). The Extracellular portion of the chain corresponds to 364-372 (SFFSKNCKQ). The helical transmembrane segment at 373–393 (FLWLEIISSTIQSCQGILNFL) threads the bilayer. Over 394–470 (SYLSIFKKLK…DFDNNQIQEK (77 aa)) the chain is Cytoplasmic.

The protein belongs to the G-protein coupled receptor 5 family.

The protein localises to the membrane. In terms of biological role, receptor for cAMP. This chain is Cyclic AMP receptor-like protein D (crlD), found in Dictyostelium discoideum (Social amoeba).